The chain runs to 529 residues: Heat shock factor protein 1 (529 aa).

At methionine 1 the chain carries N-acetylmethionine. Residues 15–120 are DNA-binding domain; that stretch reads VPAFLTKLWT…LLENIKRKVT (106 aa). An N6-acetyllysine modification is found at lysine 80. Residue lysine 91 is modified to N6-acetyllysine; alternate. A Glycyl lysine isopeptide (Lys-Gly) (interchain with G-Cter in SUMO2); alternate cross-link involves residue lysine 91. Lysine 118 carries the N6-acetyllysine modification. Serine 121 bears the Phosphoserine; by MAPKAPK2 mark. Glycyl lysine isopeptide (Lys-Gly) (interchain with G-Cter in SUMO2) cross-links involve residues lysine 126 and lysine 131. The tract at residues 130 to 203 is hydrophobic repeat HR-A/B; the sequence is IKIRQDSVTK…ISLVQSNRIL (74 aa). The residue at position 142 (threonine 142) is a Phosphothreonine; by CK2. Residues lysine 150 and lysine 188 each carry the N6-acetyllysine modification. The d domain stretch occupies residues 203–224; it reads LGVKRKIPLMLNDSGSAHSMPK. Position 208 is an N6-acetyllysine; alternate (lysine 208). A Glycyl lysine isopeptide (Lys-Gly) (interchain with G-Cter in SUMO2); alternate cross-link involves residue lysine 208. A Phosphoserine; by PLK1 modification is found at serine 216. Positions 221 to 310 are regulatory domain; the sequence is SMPKYSRQFS…PPSPPQSPRV (90 aa). Lysine 224 participates in a covalent cross-link: Glycyl lysine isopeptide (Lys-Gly) (interchain with G-Cter in SUMO2). Serine 230 carries the phosphoserine; by CAMK2A modification. Residues serine 275 and serine 292 each carry the phosphoserine modification. The tract at residues 295 to 324 is disordered; that stretch reads VRVKEEPPSPPQSPRVEEASPGRPSSVDTL. An N6-acetyllysine; alternate modification is found at lysine 298. A Glycyl lysine isopeptide (Lys-Gly) (interchain with G-Cter in SUMO2); alternate cross-link involves residue lysine 298. A Glycyl lysine isopeptide (Lys-Gly) (interchain with G-Cter in SUMO); alternate cross-link involves residue lysine 298. Position 303 is a phosphoserine; by GSK3-beta (serine 303). Position 307 is a phosphoserine; by MAPK3 (serine 307). Residues serine 314 and serine 319 each carry the phosphoserine modification. At serine 320 the chain carries Phosphoserine; by PKA. A Phosphothreonine modification is found at threonine 323. The residue at position 326 (serine 326) is a Phosphoserine; by MAPK12. The interval 336–372 is disordered; the sequence is RESEPAPASVTALTDARGHTDTEGRPPSPPPTSTPEK. Position 344 is a phosphoserine (serine 344). Position 363 is a phosphoserine; by MAPK8 (serine 363). Residues 371–529 are transactivation domain; sequence EKCLSVACLD…PPKAKDPTVS (159 aa). Residues 384 to 409 are hydrophobic repeat HR-C; the sequence is LSDHLDAMDSNLDNLQTMLSSHGFSV. Positions 412–420 match the 9aaTAD motif; that stretch reads SALLDLFSP. The residue at position 419 (serine 419) is a Phosphoserine; by PLK1. Position 444 is a phosphoserine (serine 444). Disordered regions lie at residues 444 to 463 and 502 to 529; these read SPQEPPRPPEAENSSPDSGK and EGDGFAEDPTISLLTGSEPPKAKDPTVS. N6-acetyllysine is present on lysine 524.

This sequence belongs to the HSF family. In terms of assembly, monomer; cytoplasmic latent and transcriptionally inactive monomeric form in unstressed cells. Homotrimer; in response to stress, such as heat shock, homotrimerizes and translocates into the nucleus, binds to heat shock element (HSE) sequences in promoter of heat shock protein (HSP) genes and acquires transcriptional ability. Interacts (via monomeric form) with FKBP4; this interaction occurs in unstressed cells. Associates (via monomeric form) with HSP90 proteins in a multichaperone complex in unnstressed cell; this association maintains HSF1 in a non-DNA-binding and transcriptional inactive form by preventing HSF1 homotrimerization. Homotrimeric transactivation activity is modulated by protein-protein interactions and post-translational modifications. Interacts with HSP90AA1; this interaction is decreased in a IER5-dependent manner, promoting HSF1 accumulation in the nucleus, homotrimerization and DNA-binding activities. Part (via regulatory domain in the homotrimeric form) of a large heat shock-induced HSP90-dependent multichaperone complex at least composed of FKBP4, FKBP5, HSP90 proteins, PPID, PPP5C and PTGES3; this association maintains the HSF1 homotrimeric DNA-bound form in a transcriptionally inactive form. Interacts with BAG3 (via BAG domain); this interaction occurs in normal and heat-shocked cells promoting nuclear shuttling of HSF1 in a BAG3-dependent manner. Interacts (via homotrimeric and hyperphosphorylated form) with FKBP4; this interaction occurs upon heat shock in a HSP90-dependent multichaperone complex. Interacts (via homotrimeric form preferentially) with EEF1A proteins. In heat shocked cells, stress-denatured proteins compete with HSF1 homotrimeric DNA-bound form for association of the HSP90-dependent multichaperone complex, and hence alleviating repression of HSF1-mediated transcriptional activity. Interacts (via homotrimeric form preferentially) with DAXX; this interaction relieves homotrimeric HSF1 from repression of its transcriptional activity by HSP90-dependent multichaperone complex upon heat shock. Interacts (via D domain and preferentially with hyperphosphorylated form) with JNK1; this interaction occurs under both normal growth conditions and immediately upon heat shock. Interacts (via D domain and preferentially with hyperphosphorylated form) with MAPK3; this interaction occurs upon heat shock. Interacts with IER5 (via central region); this interaction promotes PPP2CA-induced dephosphorylation on Ser-121, Ser-307, Ser-314, Thr-323 and Thr-367 and HSF1 transactivation activity. Found in a ribonucleoprotein complex composed of the HSF1 homotrimeric form, translation elongation factor eEF1A proteins and non-coding RNA heat shock RNA-1 (HSR1); this complex occurs upon heat shock and stimulates HSF1 DNA-binding activity. Interacts (via transactivation domain) with HSPA1A/HSP70 and DNAJB1; these interactions result in the inhibition of heat shock- and HSF1-induced transcriptional activity during the attenuation and recovery phase from heat shock. Interacts (via Ser-303 and Ser-307 phosphorylated form) with YWHAE; this interaction promotes HSF1 sequestration in the cytoplasm in an ERK-dependent manner. Found in a complex with IER5 and PPP2CA. Interacts with TPR; this interaction increases upon heat shock and stimulates export of HSP70 mRNA. Interacts with SYMPK (via N-terminus) and CSTF2; these interactions occur upon heat shock. Interacts (via transactivation domain) with HSPA8. Interacts with EEF1D; this interaction occurs at heat shock promoter element (HSE) sequences. Interacts with MAPKAPK2. Interacts with PRKACA/PKA. Interacts (via transactivation domain) with GTF2A2. Interacts (via transactivation domain) with GTF2B. Interacts (via transactivation domain) with TBP. Interacts with CDK9, CCNT1 and EP300. Interacts (via N-terminus) with XRCC5 (via N-terminus) and XRCC6 (via N-terminus); these interactions are direct and prevent XRCC5/XRCC6 heterodimeric binding and non-homologous end joining (NHEJ) repair activities induced by ionizing radiation (IR). Interacts with PLK1; this interaction occurs during the early mitotic period, increases upon heat shock but does not modulate neither HSF1 homotrimerization and DNA-binding activities. Interacts (via Ser-216 phosphorylated form) with CDC20; this interaction occurs in mitosis in a MAD2L1-dependent manner and prevents PLK1-stimulated degradation of HSF1 by blocking the recruitment of the SCF(BTRC) ubiquitin ligase complex. Interacts with MAD2L1; this interaction occurs in mitosis. Interacts with BTRC; this interaction occurs during mitosis, induces its ubiquitin-dependent degradation following stimulus-dependent phosphorylation at Ser-216, a process inhibited by CDC20. Interacts with HSP90AA1 and HSP90AB1. Forms a complex with TTC5/STRAP and p300/EP300; these interactions augment chromatin-bound HSF1 and p300/EP300 histone acetyltransferase activity. In terms of processing, phosphorylated. Phosphorylated in unstressed cells; this phosphorylation is constitutive and implicated in the repression of HSF1 transcriptional activity. Phosphorylated on Ser-121 by MAPKAPK2; this phosphorylation promotes interaction with HSP90 proteins and inhibits HSF1 homotrimerization, DNA-binding and transactivation activities. Phosphorylation on Ser-303 by GSK3B/GSK3-beta and on Ser-307 by MAPK3 within the regulatory domain is involved in the repression of HSF1 transcriptional activity and occurs in a RAF1-dependent manner. Phosphorylation on Ser-303 and Ser-307 increases HSF1 nuclear export in a YWHAE- and XPO1/CRM1-dependent manner. Phosphorylation on Ser-307 is a prerequisite for phosphorylation on Ser-303. According to PubMed:9535852, Ser-303 is not phosphorylated in unstressed cells. Phosphorylated on Ser-419 by PLK1; phosphorylation promotes nuclear translocation upon heat shock. Hyperphosphorylated upon heat shock and during the attenuation and recovery phase period of the heat shock response. Phosphorylated on Thr-142; this phosphorylation increases HSF1 transactivation activity upon heat shock. Phosphorylation on Ser-230 by CAMK2A; this phosphorylation enhances HSF1 transactivation activity upon heat shock. Phosphorylation on Ser-326 by MAPK12; this phosphorylation enhances HSF1 nuclear translocation, homotrimerization and transactivation activities upon heat shock. Phosphorylated on Ser-320 by PRKACA/PKA; this phosphorylation promotes nuclear localization and transcriptional activity upon heat shock. Phosphorylated on Ser-363 by MAPK8; this phosphorylation occurs upon heat shock, induces HSF1 translocation into nuclear stress bodies and negatively regulates transactivation activity. Neither basal nor stress-inducible phosphorylation on Ser-230, Ser-292, Ser-303, Ser-307, Ser-314, Ser-319, Ser-320, Thr-323, Ser-326, Ser-338, Ser-344, Ser-363, Thr-367, Ser-368 and Thr-369 within the regulatory domain is involved in the regulation of HSF1 subcellular localization or DNA-binding activity; however, it negatively regulates HSF1 transactivation activity. Phosphorylated on Ser-216 by PLK1 in the early mitotic period; this phosphorylation regulates HSF1 localization to the spindle pole, the recruitment of the SCF(BTRC) ubiquitin ligase complex inducing HSF1 degradation, and hence mitotic progression. Dephosphorylated on Ser-121, Ser-307, Ser-314, Thr-323 and Thr-367 by phosphatase PPP2CA in an IER5-dependent manner, leading to HSF1-mediated transactivation activity. Sumoylated with SUMO1 and SUMO2 upon heat shock in a ERK2-dependent manner. Sumoylated by SUMO1 on Lys-298; sumoylation occurs upon heat shock and promotes its localization to nuclear stress bodies and DNA-binding activity. Phosphorylation on Ser-303 and Ser-307 is probably a prerequisite for sumoylation. Post-translationally, acetylated on Lys-118; this acetylation is decreased in a IER5-dependent manner. Acetylated on Lys-118, Lys-208 and Lys-298; these acetylations occur in a EP300-dependent manner. Acetylated on Lys-80; this acetylation inhibits DNA-binding activity upon heat shock. Deacetylated on Lys-80 by SIRT1; this deacetylation increases DNA-binding activity. In terms of processing, ubiquitinated by SCF(BTRC) and degraded following stimulus-dependent phosphorylation at Ser-216 by PLK1 in mitosis. Polyubiquitinated. Undergoes proteasomal degradation upon heat shock and during the attenuation and recovery phase period of the heat shock response.

Its subcellular location is the nucleus. It localises to the cytoplasm. It is found in the nucleoplasm. The protein localises to the perinuclear region. The protein resides in the cytoskeleton. Its subcellular location is the spindle pole. It localises to the microtubule organizing center. It is found in the centrosome. The protein localises to the chromosome. The protein resides in the centromere. Its subcellular location is the kinetochore. Its function is as follows. Functions as a stress-inducible and DNA-binding transcription factor that plays a central role in the transcriptional activation of the heat shock response (HSR), leading to the expression of a large class of molecular chaperones, heat shock proteins (HSPs), that protect cells from cellular insult damage. In unstressed cells, is present in a HSP90-containing multichaperone complex that maintains it in a non-DNA-binding inactivated monomeric form. Upon exposure to heat and other stress stimuli, undergoes homotrimerization and activates HSP gene transcription through binding to site-specific heat shock elements (HSEs) present in the promoter regions of HSP genes. Upon heat shock stress, forms a chromatin-associated complex with TTC5/STRAP and p300/EP300 to stimulate HSR transcription, therefore increasing cell survival. Activation is reversible, and during the attenuation and recovery phase period of the HSR, returns to its unactivated form. Binds to inverted 5'-NGAAN-3' pentamer DNA sequences. Binds to chromatin at heat shock gene promoters. Activates transcription of transcription factor FOXR1 which in turn activates transcription of the heat shock chaperones HSPA1A and HSPA6 and the antioxidant NADPH-dependent reductase DHRS2. Also serves several other functions independently of its transcriptional activity. Involved in the repression of Ras-induced transcriptional activation of the c-fos gene in heat-stressed cells. Positively regulates pre-mRNA 3'-end processing and polyadenylation of HSP70 mRNA upon heat-stressed cells in a symplekin (SYMPK)-dependent manner. Plays a role in nuclear export of stress-induced HSP70 mRNA. Plays a role in the regulation of mitotic progression. Also plays a role as a negative regulator of non-homologous end joining (NHEJ) repair activity in a DNA damage-dependent manner. Involved in stress-induced cancer cell proliferation in a IER5-dependent manner. Functionally, (Microbial infection) Plays a role in latent human immunodeficiency virus (HIV-1) transcriptional reactivation. Binds to the HIV-1 long terminal repeat promoter (LTR) to reactivate viral transcription by recruiting cellular transcriptional elongation factors, such as CDK9, CCNT1 and EP300. The chain is Heat shock factor protein 1 from Homo sapiens (Human).